The primary structure comprises 107 residues: uncharacterized protein (107 aa).

2 disordered regions span residues 51–75 and 88–107; these read VQRS…TQSA and NPTP…APEP. A compositionally biased stretch (polar residues) spans 63-75; sequence NGNQGSAIPTQSA.

This is an uncharacterized protein from Fowl adenovirus A serotype 1 (strain CELO / Phelps) (FAdV-1).